Here is a 419-residue protein sequence, read N- to C-terminus: DNA primase DnaG (419 aa).

One can recognise a Toprim domain in the interval Asp168 to Glu244. Mg(2+)-binding residues include Glu174, Asp218, and Asp220. Composition is skewed to basic and acidic residues over residues Lys280–Glu291 and Lys306–Pro316. The tract at residues Lys280 to Thr317 is disordered.

Belongs to the archaeal DnaG primase family. As to quaternary structure, forms a ternary complex with MCM helicase and DNA. Component of the archaeal exosome complex. Requires Mg(2+) as cofactor.

The catalysed reaction is ssDNA + n NTP = ssDNA/pppN(pN)n-1 hybrid + (n-1) diphosphate.. RNA polymerase that catalyzes the synthesis of short RNA molecules used as primers for DNA polymerase during DNA replication. Also part of the exosome, which is a complex involved in RNA degradation. Acts as a poly(A)-binding protein that enhances the interaction between heteromeric, adenine-rich transcripts and the exosome. This chain is DNA primase DnaG, found in Aeropyrum pernix (strain ATCC 700893 / DSM 11879 / JCM 9820 / NBRC 100138 / K1).